Here is a 54-residue protein sequence, read N- to C-terminus: Large ribosomal subunit protein bL32 (54 aa).

A disordered region spans residues 1–26; the sequence is MAVQKNKPTRSKRGMRRSHDSLTAPH. A compositionally biased stretch (basic residues) spans 7-16; it reads KPTRSKRGMR.

Belongs to the bacterial ribosomal protein bL32 family.

In Buchnera aphidicola subsp. Acyrthosiphon pisum (strain 5A), this protein is Large ribosomal subunit protein bL32.